A 946-amino-acid chain; its full sequence is ATP-dependent 6-phosphofructokinase subunit beta (946 aa).

Residues 1 to 559 (MISIVNGTST…HLANFMAMNT (559 aa)) are N-terminal catalytic PFK domain 1. ATP is bound by residues glycine 192, 256-257 (RC), and 286-289 (GDGS). Mg(2+) is bound at residue aspartate 287. Beta-D-fructose 6-phosphate-binding positions include 332–334 (SID), arginine 369, 376–378 (MGR), glutamate 433, arginine 461, and 467–470 (HVQR). The active-site Proton acceptor is the aspartate 334. Residues 560–573 (ANHEKPTLPREKRK) form an interdomain linker region. Positions 574-946 (KIAIINIGAP…LVGRTRLDKP (373 aa)) are C-terminal regulatory PFK domain 2. Residues arginine 644, 702 to 706 (TISNN), 747 to 749 (QGG), lysine 833, 839 to 842 (HVQQ), and arginine 920 contribute to the beta-D-fructose 2,6-bisphosphate site.

It belongs to the phosphofructokinase type A (PFKA) family. ATP-dependent PFK group I subfamily. Eukaryotic two domain clade 'E' sub-subfamily. As to quaternary structure, heterooctamer of 4 alpha and 4 beta chains. It depends on Mg(2+) as a cofactor.

The protein resides in the cytoplasm. It carries out the reaction beta-D-fructose 6-phosphate + ATP = beta-D-fructose 1,6-bisphosphate + ADP + H(+). Its pathway is carbohydrate degradation; glycolysis; D-glyceraldehyde 3-phosphate and glycerone phosphate from D-glucose: step 3/4. With respect to regulation, allosterically activated by ADP, AMP, or fructose 2,6-bisphosphate, and allosterically inhibited by ATP or citrate. Its function is as follows. Catalyzes the phosphorylation of D-fructose 6-phosphate to fructose 1,6-bisphosphate by ATP, the first committing step of glycolysis. In Candida albicans (Yeast), this protein is ATP-dependent 6-phosphofructokinase subunit beta (PFK2).